Consider the following 369-residue polypeptide: Histidinol-phosphate aminotransferase 2 (369 aa).

At K227 the chain carries N6-(pyridoxal phosphate)lysine.

Belongs to the class-II pyridoxal-phosphate-dependent aminotransferase family. Histidinol-phosphate aminotransferase subfamily. Homodimer. It depends on pyridoxal 5'-phosphate as a cofactor.

It carries out the reaction L-histidinol phosphate + 2-oxoglutarate = 3-(imidazol-4-yl)-2-oxopropyl phosphate + L-glutamate. The protein operates within amino-acid biosynthesis; L-histidine biosynthesis; L-histidine from 5-phospho-alpha-D-ribose 1-diphosphate: step 7/9. The protein is Histidinol-phosphate aminotransferase 2 (hisC2) of Mesorhizobium japonicum (strain LMG 29417 / CECT 9101 / MAFF 303099) (Mesorhizobium loti (strain MAFF 303099)).